Here is a 318-residue protein sequence, read N- to C-terminus: Pantothenate synthetase (318 aa).

ATP is bound at residue 44 to 51; the sequence is MGALHQGH. The Proton donor role is filled by His-51. Gln-75 lines the (R)-pantoate pocket. Gln-75 lines the beta-alanine pocket. 161–164 contributes to the ATP binding site; it reads GEKD. Gln-167 contacts (R)-pantoate. Residues Val-190 and 198–201 each bind ATP; that span reads LSSR. A disordered region spans residues 295–318; sequence DGHPNLDSQPEPAGTDPALLPPAR.

Belongs to the pantothenate synthetase family. As to quaternary structure, homodimer.

It localises to the cytoplasm. It carries out the reaction (R)-pantoate + beta-alanine + ATP = (R)-pantothenate + AMP + diphosphate + H(+). Its pathway is cofactor biosynthesis; (R)-pantothenate biosynthesis; (R)-pantothenate from (R)-pantoate and beta-alanine: step 1/1. Its function is as follows. Catalyzes the condensation of pantoate with beta-alanine in an ATP-dependent reaction via a pantoyl-adenylate intermediate. In Nocardia farcinica (strain IFM 10152), this protein is Pantothenate synthetase.